A 288-amino-acid chain; its full sequence is tRNA pseudouridine synthase B (288 aa).

Aspartate 38 acts as the Nucleophile in catalysis.

The protein belongs to the pseudouridine synthase TruB family. Type 1 subfamily.

It carries out the reaction uridine(55) in tRNA = pseudouridine(55) in tRNA. Responsible for synthesis of pseudouridine from uracil-55 in the psi GC loop of transfer RNAs. The chain is tRNA pseudouridine synthase B from Carboxydothermus hydrogenoformans (strain ATCC BAA-161 / DSM 6008 / Z-2901).